The chain runs to 343 residues: Methylthioribose-1-phosphate isomerase (343 aa).

Substrate-binding positions include 48–50 (RGA), arginine 88, and glutamine 193. The active-site Proton donor is aspartate 234. 244–245 (NK) lines the substrate pocket.

Belongs to the eIF-2B alpha/beta/delta subunits family. MtnA subfamily.

It catalyses the reaction 5-(methylsulfanyl)-alpha-D-ribose 1-phosphate = 5-(methylsulfanyl)-D-ribulose 1-phosphate. Its pathway is amino-acid biosynthesis; L-methionine biosynthesis via salvage pathway; L-methionine from S-methyl-5-thio-alpha-D-ribose 1-phosphate: step 1/6. Catalyzes the interconversion of methylthioribose-1-phosphate (MTR-1-P) into methylthioribulose-1-phosphate (MTRu-1-P). This is Methylthioribose-1-phosphate isomerase from Thermotoga neapolitana (strain ATCC 49049 / DSM 4359 / NBRC 107923 / NS-E).